We begin with the raw amino-acid sequence, 276 residues long: Melibiose/raffinose/stachyose import permease protein MelC (276 aa).

6 helical membrane passes run 11–31 (IITL…YILL), 74–94 (IITG…AYPL), 104–124 (AVFA…MVPL), 139–159 (IAIF…YSGF), 186–206 (IVFP…CVFI), and 240–260 (LHLV…LFLA). Positions 69-261 (FINTMIITGF…LPMVVLFLAL (193 aa)) constitute an ABC transmembrane type-1 domain.

The protein belongs to the binding-protein-dependent transport system permease family. As to quaternary structure, the complex is composed of two ATP-binding proteins (MsmX), two transmembrane proteins (MelC and MelD) and a solute-binding protein (MelE).

It localises to the cell membrane. In terms of biological role, part of the ABC transporter complex MelEDC-MsmX involved in melibiose, raffinose and stachyose import. Probably responsible for the translocation of the substrate across the membrane. The polypeptide is Melibiose/raffinose/stachyose import permease protein MelC (Bacillus subtilis (strain 168)).